The chain runs to 347 residues: Lipoyl synthase (347 aa).

Positions 77, 82, 88, 103, 107, 110, and 317 each coordinate [4Fe-4S] cluster. The region spanning 89 to 306 is the Radical SAM core domain; the sequence is FADGTATFMI…MDYGKKIGFF (218 aa).

It belongs to the radical SAM superfamily. Lipoyl synthase family. Requires [4Fe-4S] cluster as cofactor.

It is found in the cytoplasm. It catalyses the reaction [[Fe-S] cluster scaffold protein carrying a second [4Fe-4S](2+) cluster] + N(6)-octanoyl-L-lysyl-[protein] + 2 oxidized [2Fe-2S]-[ferredoxin] + 2 S-adenosyl-L-methionine + 4 H(+) = [[Fe-S] cluster scaffold protein] + N(6)-[(R)-dihydrolipoyl]-L-lysyl-[protein] + 4 Fe(3+) + 2 hydrogen sulfide + 2 5'-deoxyadenosine + 2 L-methionine + 2 reduced [2Fe-2S]-[ferredoxin]. The protein operates within protein modification; protein lipoylation via endogenous pathway; protein N(6)-(lipoyl)lysine from octanoyl-[acyl-carrier-protein]: step 2/2. Functionally, catalyzes the radical-mediated insertion of two sulfur atoms into the C-6 and C-8 positions of the octanoyl moiety bound to the lipoyl domains of lipoate-dependent enzymes, thereby converting the octanoylated domains into lipoylated derivatives. This Psychrobacter cryohalolentis (strain ATCC BAA-1226 / DSM 17306 / VKM B-2378 / K5) protein is Lipoyl synthase.